Reading from the N-terminus, the 512-residue chain is Maturase K (512 aa).

This sequence belongs to the intron maturase 2 family. MatK subfamily.

It is found in the plastid. The protein localises to the chloroplast. In terms of biological role, usually encoded in the trnK tRNA gene intron. Probably assists in splicing its own and other chloroplast group II introns. This is Maturase K from Oenothera biennis (German evening primrose).